A 278-amino-acid chain; its full sequence is Gamma carbonic anhydrase 2, mitochondrial (278 aa).

The N-terminal 43 residues, 1–43 (MGTLGRAIYTVGNWIRGTGQALDRVGSLLQGSHRIEEHLSRHR), are a transit peptide targeting the mitochondrion. Substrate-binding positions include 86–88 (RGD) and 101–102 (QD). Positions 107, 130, and 135 each coordinate Zn(2+). Position 209 (Asn209) interacts with substrate.

The protein belongs to the gamma-class carbonic anhydrase family. In terms of assembly, homotrimer. Component of the mitochondrial oxidoreductase respiratory chain complex I; element of the extra matrix-exposed domain, which is attached to the membrane arm of this complex. Interacts with GAMMACAL1 and GAMMACAL2. It depends on Zn(2+) as a cofactor. As to expression, constitutively expressed in roots and leaves, with higher levels in flowers, particularly in tapetal tissue of anthers, inflorescence (IM) and floral meristems (FM).

Its subcellular location is the mitochondrion membrane. Its function is as follows. Enzyme involved in the catabolism of H(2)CO(3) but that does not mediates the reversible hydration of carbon dioxide. Mediates complex I assembly in mitochondria and respiration. Binds HCO(3)-. Required for male fertility during anther development and dehiscence to regulate the secondary thickenings of the endothecial cell wall, probably by modulating H(2)O(2)-dependent lignin polymerization. This is Gamma carbonic anhydrase 2, mitochondrial (GAMMACA2) from Arabidopsis thaliana (Mouse-ear cress).